A 214-amino-acid chain; its full sequence is NADH-quinone oxidoreductase subunit C (214 aa).

It belongs to the complex I 30 kDa subunit family. As to quaternary structure, NDH-1 is composed of 14 different subunits. Subunits NuoB, C, D, E, F, and G constitute the peripheral sector of the complex.

Its subcellular location is the cell inner membrane. The enzyme catalyses a quinone + NADH + 5 H(+)(in) = a quinol + NAD(+) + 4 H(+)(out). Its function is as follows. NDH-1 shuttles electrons from NADH, via FMN and iron-sulfur (Fe-S) centers, to quinones in the respiratory chain. The immediate electron acceptor for the enzyme in this species is believed to be ubiquinone. Couples the redox reaction to proton translocation (for every two electrons transferred, four hydrogen ions are translocated across the cytoplasmic membrane), and thus conserves the redox energy in a proton gradient. In Francisella tularensis subsp. novicida (strain U112), this protein is NADH-quinone oxidoreductase subunit C.